We begin with the raw amino-acid sequence, 83 residues long: Hepcidin (83 aa).

The N-terminal stretch at methionine 1 to threonine 23 is a signal peptide. The propeptide occupies threonine 24–glutamine 53. 4 disulfide bridges follow: cysteine 65/cysteine 81, cysteine 68/cysteine 71, cysteine 69/cysteine 77, and cysteine 72/cysteine 80.

This sequence belongs to the hepcidin family. As to quaternary structure, interacts with SLC40A1; this interaction promotes SLC40A1 rapid ubiquitination. As to expression, highly expressed in the liver and to a much lesser extent in the heart. Secreted in blood.

It localises to the secreted. In terms of biological role, liver-produced hormone that constitutes the main circulating regulator of iron absorption and distribution across tissues. Acts by promoting endocytosis and degradation of SLC40A1, leading to the retention of iron in iron-exporting cells and decreased flow of iron into plasma. Controls the major flows of iron into plasma: absorption of dietary iron in the intestine, recycling of iron by macrophages, which phagocytose old erythrocytes and other cells, and mobilization of stored iron from hepatocytes. The chain is Hepcidin (Hamp) from Mus musculus (Mouse).